The following is a 1262-amino-acid chain: MEDGKPVWAPHPTDGFQMGNIVDIGPDSLTIEPLNQKGKTFLALINQVFPAEEDSKKDVEDNCSLMYLNEATLLHNVKVRYSKDRIYTYVANILIAVNPYFDIPKIYSSDTIKSYQGKSLGTMPPHVFAIADKAFRDMKVLKMSQSIIVSGESGAGKTENTKFVLRYLTESYGTGQDIDDRIVEANPLLEAFGNAKTVRNNNSSRFGKFVEIHFNEKSSVVGGFVSHYLLEKSRICVQGKEERNYHIFYRLCAGASEDIREKLHLSSPDNFRYLNRGCTRFFANKETDKQILQNRKSPEYVKAGSLKDPLLDDHGDFIRMCTAMKKIGLDDEEKLDLFRVVAGVLHLGNIDFEEAGSTSGGCNLKNKSAPSLEYCAELLGLDQDDLRVSLTTRVMLTTAGGTKGTVIKVPLKVEQANNARDALAKTVYSHLFDHVVNRVNQCFPFETSSYFIGVLDIAGFEYFEHNSFEQFCINYCNEKLQQFFNERILKEEQELYQKEGLGVNEVHYVDNQDCIDLIEVKLVGILDILDEENRLPQPSDQHFTSVVHQKHKDHFRLTIPRKSKLAVHRNLRDDEGFIIRHFAGAVCYETTQFVEKNNDALHMSLESLICESRDKFIRALFESSTNNNKDTKQKAGKLSFISVGNKFKTQLNLLLDKLRSTGASFIRCIKPNLKMTSHHFEGAQILSQLQCSGMVSVLDLMQGGFPSRASFHELYNMYKKYMPEKLARLDPRLFCKALFKALGLNEVDYKFGLTKVFFRPGKFAEFDQIMKSDPDHLAELVKRVNLWLVCSRWKKVQWCSLSVIKLKNKIKYRAEACIKMQKTIRMWLCKRRHKPRIDGLVKVGTLKKRLDKFNEVVSALKDGKPEVNRQIKNLEISIDALMAKIKSTMMTREQIQKEYDALVKSSEDLLSALQKKKQQEEEAERLRRIQEEMEKERKRREEDEERRRKEEEERRMKLEMEAKRKQEEEERKKREDDEKRIQAEVEAQLARQREEESQQQAVLAQECRDRELALRIAQNESELISDEAQGDMALRRGPAVQATKAAAGTKKHDLSKWKYAELRDTINTSCDIELLAACREEFHRRLKVYHAWKSKNKKRNTETEQRAPKSVTDYDFAPFLNNSPQQNPAAQLPARQQEIDMKRQQRFFRIPFIRPADQYKDPQNKKKGWWYAHFDGPWIARQMELHPDKPPILLVAGKDDMEMCELNLEETGLTRKRGAEILPRQFEEIWERCGGIQYLQSAIESRQARPTYATAMLQNLLK.

The Myosin N-terminal SH3-like domain maps to 2 to 53; that stretch reads EDGKPVWAPHPTDGFQMGNIVDIGPDSLTIEPLNQKGKTFLALINQVFPAEE. One can recognise a Myosin motor domain in the interval 57–771; it reads KDVEDNCSLM…KFAEFDQIMK (715 aa). 151–158 is an ATP binding site; it reads GESGAGKT. Phosphoserine is present on S267. Positions 273-317 are responsible for slow ATPase activity; sequence YLNRGCTRFFANKETDKQILQNRKSPEYVKAGSLKDPLLDDHGDF. The residue at position 405 (T405) is a Phosphothreonine. S604 carries the phosphoserine modification. Actin-binding regions lie at residues 651–673 and 665–672; these read LNLL…KPNL and FIRCIKPN. Residues 782–810 form a required for binding calmodulin region; that stretch reads KRVNLWLVCSRWKKVQWCSLSVIKLKNKI. In terms of domain architecture, IQ spans 814-834; that stretch reads AEACIKMQKTIRMWLCKRRHK. The interval 835–916 is three-helix bundle; the sequence is PRIDGLVKVG…EDLLSALQKK (82 aa). Residues 864–984 adopt a coiled-coil conformation; the sequence is KPEVNRQIKN…EDDEKRIQAE (121 aa). The SAH stretch occupies residues 917–984; sequence KQQEEEAERL…EDDEKRIQAE (68 aa). Positions 933–955 are disordered; the sequence is MEKERKRREEDEERRRKEEEERR. Position 1025 is a phosphoserine (S1025). Positions 1034-1253 are interaction with TAX1BP1 and CALCOCO2/NDP52; that stretch reads LRRGPAVQAT…ESRQARPTYA (220 aa). Residues 1084–1086 are interaction with OPTN; that stretch reads RRL. S1123 is subject to Phosphoserine. Residues 1125-1253 are interaction with TOM1; the sequence is QQNPAAQLPA…ESRQARPTYA (129 aa).

This sequence belongs to the TRAFAC class myosin-kinesin ATPase superfamily. Myosin family. In terms of assembly, homodimer; dimerization seems to implicate the unfolding of the three-helix bundle region creating an additional calmodulin binding site, and cargo binding. Able to function as a monomer under specific conditions in vitro. Forms a complex with CFTR and DAB2 in the apical membrane of epithelial cells. Component of the DISP/DOCK7-induced septin displacement complex, at least composed of DOCK7, LRCH3 and MYO6. Binding to calmodulin through a unique insert, not found in other myosins, located in the neck region between the motor domain and the IQ domain appears to contribute to the directionality reversal. This interaction occurs only if the C-terminal lobe of calmodulin is occupied by calcium. Interaction with F-actin/ACTN1 occurs only at the apical brush border domain of the proximal tubule cells. Interacts with DAB2. In vitro, the C-terminal globular tail binds a C-terminal region of DAB2. Interacts with CFTR. Interacts with CABP5. Interacts (via residues 1128-1256) with TOM1 (via residues 392-463). Interacts (via residues 1060-1285) with OPTN. Interacts (via residues 1060-1285) with TAX1BP1 and CALCOCO2/NDP52. Interacts with TOM1L2. Interacts with CLIC5; may work together in a complex which also includes RDX and MYO6 to stabilize linkages between the plasma membrane and subjacent actin cytoskeleton at the base of stereocilia. Phosphorylation in the motor domain, induced by EGF, results in translocation of MYO6 from the cell surface to membrane ruffles and affects F-actin dynamics. Phosphorylated in vitro by p21-activated kinase (PAK). Within the cochlea, expressed specifically within the sensory hair cells (at protein level). Expressed in the inner and outer plexiform layer of the retina (at protein level). Widely expressed. Expressed in the brain, kidney, liver, and testis.

The protein localises to the golgi apparatus. It localises to the trans-Golgi network membrane. It is found in the nucleus. The protein resides in the cytoplasm. Its subcellular location is the perinuclear region. The protein localises to the membrane. It localises to the clathrin-coated pit. It is found in the cytoplasmic vesicle. The protein resides in the clathrin-coated vesicle. Its subcellular location is the cell projection. The protein localises to the filopodium. It localises to the ruffle membrane. It is found in the microvillus. The protein resides in the cytosol. Functionally, myosins are actin-based motor molecules with ATPase activity. Unconventional myosins serve in intracellular movements. Myosin 6 is a reverse-direction motor protein that moves towards the minus-end of actin filaments. Has slow rate of actin-activated ADP release due to weak ATP binding. Functions in a variety of intracellular processes such as vesicular membrane trafficking and cell migration. Required for the structural integrity of the Golgi apparatus via the p53-dependent pro-survival pathway. Appears to be involved in a very early step of clathrin-mediated endocytosis in polarized epithelial cells. Together with TOM1, mediates delivery of endocytic cargo to autophagosomes thereby promoting autophagosome maturation and driving fusion with lysosomes. Links TOM1 with autophagy receptors, such as TAX1BP1; CALCOCO2/NDP52 and OPTN. May act as a regulator of F-actin dynamics. As part of the DISP complex, may regulate the association of septins with actin and thereby regulate the actin cytoskeleton. May play a role in transporting DAB2 from the plasma membrane to specific cellular targets. May play a role in the extension and network organization of neurites. Required for structural integrity of inner ear hair cells. Required for the correct localization of CLIC5 and RDX at the stereocilium base. Modulates RNA polymerase II-dependent transcription. This chain is Unconventional myosin-VI (Myo6), found in Mus musculus (Mouse).